The primary structure comprises 312 residues: Large ribosomal subunit protein uL10 (312 aa).

A Glycyl lysine isopeptide (Lys-Gly) (interchain with G-Cter in ubiquitin) cross-link involves residue Lys14. At Ser68 the chain carries Phosphoserine. Residues Lys97 and Lys144 each participate in a glycyl lysine isopeptide (Lys-Gly) (interchain with G-Cter in ubiquitin) cross-link. The segment at Ser199 to Pro230 is interaction with P1A-P2B. The interaction with P1B-P2A stretch occupies residues Thr231–Pro258. Over residues Pro278–Glu293 the composition is skewed to low complexity. The disordered stretch occupies residues Pro278 to Asp312. Positions Ala294–Met306 are enriched in acidic residues. Ser302 is modified (phosphoserine; by CK2).

It belongs to the universal ribosomal protein uL10 family. In terms of assembly, component of the large ribosomal subunit (LSU). Mature yeast ribosomes consist of a small (40S) and a large (60S) subunit. The 40S small subunit contains 1 molecule of ribosomal RNA (18S rRNA) and 33 different proteins (encoded by 57 genes). The large 60S subunit contains 3 rRNA molecules (25S, 5.8S and 5S rRNA) and 46 different proteins (encoded by 81 genes). The 5 acidic ribosomal P-proteins form the stalk structure of the 60S subunit. They are organized as a pentameric complex in which uL10/P0 interacts with 2 heterodimers, P1A-P2B and P1B-P2A. uL10 directly interacts with 28S rRNA. uL10 interacts with YFL034W.

It is found in the cytoplasm. Component of the ribosome, a large ribonucleoprotein complex responsible for the synthesis of proteins in the cell. The small ribosomal subunit (SSU) binds messenger RNAs (mRNAs) and translates the encoded message by selecting cognate aminoacyl-transfer RNA (tRNA) molecules. The large subunit (LSU) contains the ribosomal catalytic site termed the peptidyl transferase center (PTC), which catalyzes the formation of peptide bonds, thereby polymerizing the amino acids delivered by tRNAs into a polypeptide chain. The nascent polypeptides leave the ribosome through a tunnel in the LSU and interact with protein factors that function in enzymatic processing, targeting, and the membrane insertion of nascent chains at the exit of the ribosomal tunnel. uL10 forms part of the P stalk that participates in recruiting G proteins to the ribosome. This Saccharomyces cerevisiae (strain ATCC 204508 / S288c) (Baker's yeast) protein is Large ribosomal subunit protein uL10.